A 392-amino-acid polypeptide reads, in one-letter code: Tryptophan 2,3-dioxygenase (392 aa).

Residues 57 to 61 (FIVTH) and R128 contribute to the substrate site. H313 provides a ligand contact to heme. T328 is a binding site for substrate.

It belongs to the tryptophan 2,3-dioxygenase family. In terms of assembly, homotetramer. Dimer of dimers. Heme serves as cofactor.

The catalysed reaction is L-tryptophan + O2 = N-formyl-L-kynurenine. It participates in amino-acid degradation; L-tryptophan degradation via kynurenine pathway; L-kynurenine from L-tryptophan: step 1/2. The protein operates within pigment biosynthesis; ommochrome biosynthesis. Functionally, heme-dependent dioxygenase that catalyzes the oxidative cleavage of the L-tryptophan (L-Trp) pyrrole ring and converts L-tryptophan to N-formyl-L-kynurenine. Catalyzes the oxidative cleavage of the indole moiety. The polypeptide is Tryptophan 2,3-dioxygenase (Anopheles gambiae (African malaria mosquito)).